The chain runs to 538 residues: Syncytin-2 (538 aa).

The N-terminal stretch at 1-15 (MGLLLLLLILTPLLA) is a signal peptide. Topologically, residues 16–478 (AYCHPDFRLL…GWLNWEGTWK (463 aa)) are extracellular. The CXXC motif lies at 43–46 (CWLC). Disulfide bonds link cysteine 43–cysteine 46, cysteine 43–cysteine 439, and cysteine 431–cysteine 438. N-linked (GlcNAc...) asparagine glycosylation is found at asparagine 146, asparagine 177, asparagine 220, asparagine 241, asparagine 247, asparagine 312, and asparagine 332. A fusion peptide region spans residues 354 to 374 (LIPLLVGLGIVGSAGTGIAGI). A CKS-17 motif is present at residues 414–430 (LQNRRGLDMLTAAQGGI). Residues 431 to 439 (CLALDEKCC) carry the CX6CC motif. An N-linked (GlcNAc...) asparagine glycan is attached at asparagine 443. Residues 479 to 499 (WFSWVLPFTGPLVSLLLLLLF) form a helical membrane-spanning segment. At 500–538 (GPCLLNLITQFVSSRLQATKLQMKLNKRVHPRNSQESPF) the chain is on the cytoplasmic side.

This sequence belongs to the gamma type-C retroviral envelope protein family. HERV class-I FRD env subfamily. As to quaternary structure, the surface and transmembrane proteins form a heterodimer. They are attached by non-covalent interactions or by a labile interchain disulfide bond. Post-translationally, specific enzymatic cleavages in vivo yield the mature SU and TM proteins. In terms of processing, the CXXC motif is highly conserved across a broad range of retroviral envelope proteins. It is thought to participate in the formation of a labile disulfide bond possibly with the CX6CC motif present in the transmembrane protein.

It is found in the virion. The protein localises to the cell membrane. Its function is as follows. This endogenous retroviral envelope protein has retained its original fusogenic properties and participates in trophoblast fusion and the formation of a syncytium during placenta morphogenesis. The interaction with MFSD2A is apparently important for this process. Functionally, endogenous envelope proteins may have kept, lost or modified their original function during evolution but this one can still make pseudotypes with MLV, HIV-1 or SIV-1 virions and confer infectivity. Retroviral envelope proteins mediate receptor recognition and membrane fusion during early infection. The surface protein mediates receptor recognition, while the transmembrane protein anchors the envelope heterodimer to the viral membrane through one transmembrane domain. The other hydrophobic domain, called fusion peptide, mediates fusion of the viral membrane with the target cell membrane. In Callithrix jacchus (White-tufted-ear marmoset), this protein is Syncytin-2 (ERVFRD-1).